A 188-amino-acid polypeptide reads, in one-letter code: GTP cyclohydrolase 1 (188 aa).

Cysteine 78, histidine 81, and cysteine 150 together coordinate Zn(2+).

This sequence belongs to the GTP cyclohydrolase I family. Toroid-shaped homodecamer, composed of two pentamers of five dimers.

It catalyses the reaction GTP + H2O = 7,8-dihydroneopterin 3'-triphosphate + formate + H(+). Its pathway is cofactor biosynthesis; 7,8-dihydroneopterin triphosphate biosynthesis; 7,8-dihydroneopterin triphosphate from GTP: step 1/1. The sequence is that of GTP cyclohydrolase 1 from Geobacillus kaustophilus (strain HTA426).